A 179-amino-acid polypeptide reads, in one-letter code: ATP-dependent protease subunit HslV (179 aa).

Residue Thr-6 is part of the active site. Na(+) contacts are provided by Ser-164, Cys-167, and Thr-170.

Belongs to the peptidase T1B family. HslV subfamily. A double ring-shaped homohexamer of HslV is capped on each side by a ring-shaped HslU homohexamer. The assembly of the HslU/HslV complex is dependent on binding of ATP.

Its subcellular location is the cytoplasm. The catalysed reaction is ATP-dependent cleavage of peptide bonds with broad specificity.. Its activity is regulated as follows. Allosterically activated by HslU binding. Its function is as follows. Protease subunit of a proteasome-like degradation complex believed to be a general protein degrading machinery. In Listeria innocua serovar 6a (strain ATCC BAA-680 / CLIP 11262), this protein is ATP-dependent protease subunit HslV.